We begin with the raw amino-acid sequence, 497 residues long: Probable cytosol aminopeptidase (497 aa).

Mn(2+) contacts are provided by lysine 267 and aspartate 272. The active site involves lysine 279. Mn(2+) contacts are provided by aspartate 290, aspartate 349, and glutamate 351. Arginine 353 is an active-site residue.

The protein belongs to the peptidase M17 family. It depends on Mn(2+) as a cofactor.

It localises to the cytoplasm. The catalysed reaction is Release of an N-terminal amino acid, Xaa-|-Yaa-, in which Xaa is preferably Leu, but may be other amino acids including Pro although not Arg or Lys, and Yaa may be Pro. Amino acid amides and methyl esters are also readily hydrolyzed, but rates on arylamides are exceedingly low.. It catalyses the reaction Release of an N-terminal amino acid, preferentially leucine, but not glutamic or aspartic acids.. In terms of biological role, presumably involved in the processing and regular turnover of intracellular proteins. Catalyzes the removal of unsubstituted N-terminal amino acids from various peptides. The chain is Probable cytosol aminopeptidase from Nitrosomonas eutropha (strain DSM 101675 / C91 / Nm57).